The following is a 491-amino-acid chain: Probable Xaa-Pro aminopeptidase AFLA_084750 (491 aa).

Positions 271, 282, 419, and 458 each coordinate Mn(2+).

The protein belongs to the peptidase M24B family. Mn(2+) is required as a cofactor.

It catalyses the reaction Release of any N-terminal amino acid, including proline, that is linked to proline, even from a dipeptide or tripeptide.. Its function is as follows. Catalyzes the removal of a penultimate prolyl residue from the N-termini of peptides. This Aspergillus flavus (strain ATCC 200026 / FGSC A1120 / IAM 13836 / NRRL 3357 / JCM 12722 / SRRC 167) protein is Probable Xaa-Pro aminopeptidase AFLA_084750.